The primary structure comprises 381 residues: Homoserine O-succinyltransferase (381 aa).

An AB hydrolase-1 domain is found at 53–361; that stretch reads ILICHALSGS…DSVHGHDAFL (309 aa). Catalysis depends on S157, which acts as the Nucleophile. R227 contacts substrate. Active-site residues include D324 and H357. Substrate is bound at residue D358.

The protein belongs to the AB hydrolase superfamily. MetX family. Homodimer.

The protein localises to the cytoplasm. The catalysed reaction is L-homoserine + succinyl-CoA = O-succinyl-L-homoserine + CoA. It participates in amino-acid biosynthesis; L-methionine biosynthesis via de novo pathway; O-succinyl-L-homoserine from L-homoserine: step 1/1. Its function is as follows. Transfers a succinyl group from succinyl-CoA to L-homoserine, forming succinyl-L-homoserine. This chain is Homoserine O-succinyltransferase, found in Saccharophagus degradans (strain 2-40 / ATCC 43961 / DSM 17024).